Here is a 480-residue protein sequence, read N- to C-terminus: RuvB-like helicase 2 (480 aa).

An ATP-binding site is contributed by 73 to 80; it reads GEPSTGKT.

The protein belongs to the RuvB family. As to quaternary structure, forms homohexameric rings. May form a dodecamer with rept made of two stacked hexameric rings. Component of the chromatin remodeling Ino80 complex.

The protein localises to the nucleus. It catalyses the reaction ATP + H2O = ADP + phosphate + H(+). In terms of biological role, acts as a transcriptional coactivator in Wg signaling caused by altered arm signaling. Pont and rept interfere antagonistically with nuclear arm signaling function, and are required to enhance or reduce arm activity, respectively. Also an essential cofactor for the normal function of Myc; required for cellular proliferation and growth. Its function is as follows. Proposed core component of the chromatin remodeling Ino80 complex which is involved in transcriptional regulation, DNA replication and probably DNA repair. The sequence is that of RuvB-like helicase 2 from Drosophila pseudoobscura pseudoobscura (Fruit fly).